Reading from the N-terminus, the 346-residue chain is Beta-ketoacyl-[acyl-carrier-protein] synthase III (346 aa).

Active-site residues include cysteine 120 and histidine 256. The segment at 257–261 (QANIR) is ACP-binding. Residue asparagine 286 is part of the active site.

This sequence belongs to the thiolase-like superfamily. FabH family. In terms of assembly, homodimer.

It is found in the cytoplasm. The catalysed reaction is malonyl-[ACP] + acetyl-CoA + H(+) = 3-oxobutanoyl-[ACP] + CO2 + CoA. It functions in the pathway lipid metabolism; fatty acid biosynthesis. In terms of biological role, catalyzes the condensation reaction of fatty acid synthesis by the addition to an acyl acceptor of two carbons from malonyl-ACP. Catalyzes the first condensation reaction which initiates fatty acid synthesis and may therefore play a role in governing the total rate of fatty acid production. Possesses both acetoacetyl-ACP synthase and acetyl transacylase activities. Its substrate specificity determines the biosynthesis of branched-chain and/or straight-chain of fatty acids. The protein is Beta-ketoacyl-[acyl-carrier-protein] synthase III of Deinococcus geothermalis (strain DSM 11300 / CIP 105573 / AG-3a).